The sequence spans 956 residues: DNA replication helicase (956 aa).

120-127 (GTAGAGKT) contacts ATP. Residues 658-694 (PINNHVDADSSQGGQSVPVSQRMEHGQEETHDIPCLS) are disordered. Residues 667-678 (SSQGGQSVPVSQ) show a composition bias toward low complexity. A compositionally biased stretch (basic and acidic residues) spans 679 to 694 (RMEHGQEETHDIPCLS).

Belongs to the herpesviridae helicase family. Associates with the primase and the primase-associated factor to form the helicase-primase complex.

It is found in the host nucleus. In terms of biological role, component of the helicase/primase complex. Unwinds the DNA at the replication forks and generates single-stranded DNA for both leading and lagging strand synthesis. The primase synthesizes short RNA primers on the lagging strand that the polymerase elongates using dNTPs. Possesses helicase-like motifs and therefore may act as the helicase subunit of the complex. This Human cytomegalovirus (strain Merlin) (HHV-5) protein is DNA replication helicase.